The primary structure comprises 74 residues: Insertion element IS986 uncharacterized 8.2 kDa protein (74 aa).

In Mycobacterium tuberculosis, this protein is Insertion element IS986 uncharacterized 8.2 kDa protein.